The following is a 389-amino-acid chain: MNKITGIIAEFNPFHKGHEYLLNQIEGIKIVAMSGNWMQRGEPAIFDKWTRAQMALACGADLVVELPVTVSAQAADFFASGAVDILKNLGITDLAFGSESAIDYNEIADIYEKRGEEMESYIQSLADQLSYPEKTQKMWQHFTGIEFDGNTPNHVLALAYAKAAAGKQINLQAIKRVGKFHSLELTEGFASATALRQELFSLTERQNLLTEQTNQSVSNKLVLTDLSAIKNHVPSAILAAYASPKTNWAAYFPLLQYKIRVDEHLENIFQVNQELSVRLKKAVKSAKNFDELVEQVYTKRYTKARVRRLLTYILLNIPKQFDLPEQIHVLGFSKTGQEILAQNRGKIISKIGQNPWDNLTQKADEIYQLGNVQFEEQNFGRKPIRSSIR.

ATP is bound by residues 8–21 (IAEF…HEYL), G97, N153, and R176.

Belongs to the TmcAL family.

The protein localises to the cytoplasm. It carries out the reaction cytidine(34) in elongator tRNA(Met) + acetate + ATP = N(4)-acetylcytidine(34) in elongator tRNA(Met) + AMP + diphosphate. Catalyzes the formation of N(4)-acetylcytidine (ac(4)C) at the wobble position of elongator tRNA(Met), using acetate and ATP as substrates. First activates an acetate ion to form acetyladenylate (Ac-AMP) and then transfers the acetyl group to tRNA to form ac(4)C34. The polypeptide is tRNA(Met) cytidine acetate ligase (Lactococcus lactis subsp. lactis (strain IL1403) (Streptococcus lactis)).